The sequence spans 101 residues: Small ribosomal subunit protein uS14 (101 aa).

The protein belongs to the universal ribosomal protein uS14 family. In terms of assembly, part of the 30S ribosomal subunit. Contacts proteins S3 and S10.

Its function is as follows. Binds 16S rRNA, required for the assembly of 30S particles and may also be responsible for determining the conformation of the 16S rRNA at the A site. This is Small ribosomal subunit protein uS14 from Bartonella bacilliformis (strain ATCC 35685 / KC583 / Herrer 020/F12,63).